The sequence spans 734 residues: Photosystem I P700 chlorophyll a apoprotein A2 (734 aa).

8 consecutive transmembrane segments (helical) span residues 46 to 69, 135 to 158, 175 to 199, 273 to 291, 330 to 353, 369 to 395, 417 to 439, and 517 to 535; these read IFAS…FHVA, LYTG…LHLQ, LNHH…HVAI, IAHH…GHMY, IHFQ…QHMY, AALY…IFFI, AIIS…LYVH, and FLVH…LILV. Positions 559 and 568 each coordinate [4Fe-4S] cluster. 2 helical membrane-spanning segments follow: residues 575-596 and 643-665; these read AFYL…YWHW and LSVW…MFLI. 3 residues coordinate chlorophyll a: His-654, Met-662, and Tyr-670. Trp-671 serves as a coordination point for phylloquinone. Residues 707–727 traverse the membrane as a helical segment; the sequence is LVGLAHFSVGYIFTYAAFLIA.

This sequence belongs to the PsaA/PsaB family. The PsaA/B heterodimer binds the P700 chlorophyll special pair and subsequent electron acceptors. PSI consists of a core antenna complex that captures photons, and an electron transfer chain that converts photonic excitation into a charge separation. The eukaryotic PSI reaction center is composed of at least 11 subunits. P700 is a chlorophyll a/chlorophyll a' dimer, A0 is one or more chlorophyll a, A1 is one or both phylloquinones and FX is a shared 4Fe-4S iron-sulfur center. is required as a cofactor.

The protein localises to the plastid. Its subcellular location is the chloroplast thylakoid membrane. It carries out the reaction reduced [plastocyanin] + hnu + oxidized [2Fe-2S]-[ferredoxin] = oxidized [plastocyanin] + reduced [2Fe-2S]-[ferredoxin]. PsaA and PsaB bind P700, the primary electron donor of photosystem I (PSI), as well as the electron acceptors A0, A1 and FX. PSI is a plastocyanin-ferredoxin oxidoreductase, converting photonic excitation into a charge separation, which transfers an electron from the donor P700 chlorophyll pair to the spectroscopically characterized acceptors A0, A1, FX, FA and FB in turn. Oxidized P700 is reduced on the lumenal side of the thylakoid membrane by plastocyanin. The sequence is that of Photosystem I P700 chlorophyll a apoprotein A2 from Saccharum hybrid (Sugarcane).